We begin with the raw amino-acid sequence, 347 residues long: Guanine nucleotide-binding protein alpha-5 subunit (347 aa).

G2 is lipidated: N-myristoyl glycine. C3 is lipidated: S-palmitoyl cysteine. The G-alpha domain maps to 27 to 347 (NETKLLLLGP…KNIFNTIINY (321 aa)). The segment at 30–43 (KLLLLGPGESGKST) is G1 motif. Residues 35–42 (GPGESGKS), 170–176 (LRSRVRT), 195–199 (DVGGQ), 264–267 (NKVD), and A319 contribute to the GTP site. S42 and T176 together coordinate Mg(2+). The tract at residues 168-176 (DVLRSRVRT) is G2 motif. Residues 191–200 (FRMLDVGGQR) form a G3 motif region. The interval 260 to 267 (IIFFNKVD) is G4 motif. A G5 motif region spans residues 317-322 (TCAIDT).

This sequence belongs to the G-alpha family. G(q) subfamily. In terms of assembly, g proteins are composed of 3 units; alpha, beta and gamma. The alpha chain contains the guanine nucleotide binding site.

In terms of biological role, guanine nucleotide-binding proteins (G proteins) are involved as modulators or transducers in various transmembrane signaling systems. In Dictyostelium discoideum (Social amoeba), this protein is Guanine nucleotide-binding protein alpha-5 subunit (gpaE).